Here is a 370-residue protein sequence, read N- to C-terminus: 4-hydroxy-3-methylbut-2-en-1-yl diphosphate synthase (flavodoxin) (370 aa).

The [4Fe-4S] cluster site is built by cysteine 270, cysteine 273, cysteine 305, and glutamate 312.

The protein belongs to the IspG family. Requires [4Fe-4S] cluster as cofactor.

The catalysed reaction is (2E)-4-hydroxy-3-methylbut-2-enyl diphosphate + oxidized [flavodoxin] + H2O + 2 H(+) = 2-C-methyl-D-erythritol 2,4-cyclic diphosphate + reduced [flavodoxin]. The protein operates within isoprenoid biosynthesis; isopentenyl diphosphate biosynthesis via DXP pathway; isopentenyl diphosphate from 1-deoxy-D-xylulose 5-phosphate: step 5/6. In terms of biological role, converts 2C-methyl-D-erythritol 2,4-cyclodiphosphate (ME-2,4cPP) into 1-hydroxy-2-methyl-2-(E)-butenyl 4-diphosphate. The protein is 4-hydroxy-3-methylbut-2-en-1-yl diphosphate synthase (flavodoxin) of Ectopseudomonas mendocina (strain ymp) (Pseudomonas mendocina).